Consider the following 409-residue polypeptide: MTQKGSMKPVKKKKTEEPELEPLCCCEYIDRNGEKNHVATCLCDCQDLDEGCDRWITCKSLQPETCERIMDTISDRLRIPWLRGAKKVNISIIPPLVLLPVFLHVASWHFLLGVVVLTSLPVLALWYYYLTHRRKEQTLFFLSLGLFSLGYMYYVFLQEVVPKGRVGPVQLAVLTCGLFLILLALHRAKKNPGYLSNPASGDRSLSSSQLECLSRKGQEKTKGFPGADMSGSLNNRTTKDDPKGSSKMPAGSPTKAKEDWCAKCQLVRPARAWHCRICGICVRRMDHHCVWINSCVGESNHQAFILALLIFLLTSVYGITLTLDTICRDRSVFTALFYCPGVYANYSSALSFTCVWYSVIITAGMAYIFLIQLINISYNVTEREVQQALRQKTGRRLLCGLIVDTGLLG.

Topologically, residues 1-87 (MTQKGSMKPV…RIPWLRGAKK (87 aa)) are cytoplasmic. The helical transmembrane segment at 88 to 106 (VNISIIPPLVLLPVFLHVA) threads the bilayer. Topologically, residues 107-109 (SWH) are lumenal. The chain crosses the membrane as a helical span at residues 110–132 (FLLGVVVLTSLPVLALWYYYLTH). The Cytoplasmic segment spans residues 133-136 (RRKE). The helical transmembrane segment at 137–157 (QTLFFLSLGLFSLGYMYYVFL) threads the bilayer. At 158 to 165 (QEVVPKGR) the chain is on the lumenal side. The chain crosses the membrane as a helical span at residues 166 to 186 (VGPVQLAVLTCGLFLILLALH). Topologically, residues 187–302 (RAKKNPGYLS…NSCVGESNHQ (116 aa)) are cytoplasmic. The segment at 215 to 255 (RKGQEKTKGFPGADMSGSLNNRTTKDDPKGSSKMPAGSPTK) is disordered. The 51-residue stretch at 259-309 (DWCAKCQLVRPARAWHCRICGICVRRMDHHCVWINSCVGESNHQAFILALL) folds into the DHHC domain. C289 acts as the S-palmitoyl cysteine intermediate in catalysis. A helical membrane pass occupies residues 303-323 (AFILALLIFLLTSVYGITLTL). The Lumenal segment spans residues 324 to 331 (DTICRDRS). The helical transmembrane segment at 332-352 (VFTALFYCPGVYANYSSALSF) threads the bilayer. Position 353 (T353) is a topological domain, cytoplasmic. A helical membrane pass occupies residues 354–374 (CVWYSVIITAGMAYIFLIQLI). The Lumenal portion of the chain corresponds to 375-409 (NISYNVTEREVQQALRQKTGRRLLCGLIVDTGLLG).

The protein belongs to the DHHC palmitoyltransferase family. Interacts with NOS1.

Its subcellular location is the golgi apparatus membrane. It is found in the golgi apparatus. It localises to the trans-Golgi network membrane. It catalyses the reaction L-cysteinyl-[protein] + hexadecanoyl-CoA = S-hexadecanoyl-L-cysteinyl-[protein] + CoA. Palmitoyltransferase that could catalyze the addition of palmitate onto various protein substrates and be involved in a variety of cellular processes. Palmitoyltransferase that mediates palmitoylation of KCNMA1, regulating localization of KCNMA1 to the plasma membrane. May be involved in NOS1 regulation and targeting to the synaptic membrane. The sequence is that of Palmitoyltransferase ZDHHC23 from Homo sapiens (Human).